We begin with the raw amino-acid sequence, 238 residues long: Probable transcriptional regulatory protein VS_II1504 (238 aa).

It belongs to the TACO1 family.

The protein resides in the cytoplasm. The sequence is that of Probable transcriptional regulatory protein VS_II1504 from Vibrio atlanticus (strain LGP32) (Vibrio splendidus (strain Mel32)).